Reading from the N-terminus, the 555-residue chain is MAADMQRKRSSECPDGTLTPSDGHSVERAESPTPGLAQGMEPGAGQEGAMFVHARSYEDLTESEDGAASGDSPKEGARGPPPLPADMRQISQDFSELSTQLTGVARDLQEEMLPGSSEDWLDPPGAVGRPATEPPREGTAEGDEEDATEAWRLHQKHVFVLSEAGKPVYSRYGSEEALSSTMGVMVALVSFLEADKNAIRSIHADGYKVVFVRRSPLVLVAVARTRQSAQELAQELLYIYYQILSLLTGAQLSHIFQQKQNYDLRRLLSGSERITDNLLQLMARDPSFLMGAARCLPLAAAVRDTVSASLQQARARSLVFSILLARNQLVALVRRKDQFLHPIDLHLLFNLISSSSSFREGEAWTPVCLPKFNAAGFFHAHISYLEPDTDLCLLFVSTDREDFFAVSDCRRRFQERLRKRGAHLALREALRTPYYSVAQVGIPDLRHFLYKSKSSGLFTSPEIEAPYTSEEEQERLLGLYQYLHSRAHNASRPLKTIYYTGPNENLLAWVTGAFELYMCYSPLGTKASAVSAIHKLMRWIRKEEDRLFILTPLTY.

Basic and acidic residues predominate over residues M1–E12. A disordered region spans residues M1–M87. Phosphoserine occurs at positions 31 and 56. T61 carries the post-translational modification Phosphothreonine. Position 91 is a phosphoserine (S91). Residues P114–A147 form a disordered region.

Belongs to the MON1/SAND family. As to quaternary structure, interacts with CCZ1. Found in a complex with RMC1, CCZ1, MON1A and MON1B. The MON1A-CCZ1B complex interacts with RIMOC1. The MON1A-CCZ1B complex interacts with RAB7A and this interaction is enhanced in the presence of RIMOC1.

Plays an important role in membrane trafficking through the secretory apparatus. Not involved in endocytic trafficking to lysosomes. Acts in concert with CCZ1, as a guanine exchange factor (GEF) for RAB7, promotes the exchange of GDP to GTP, converting it from an inactive GDP-bound form into an active GTP-bound form. This is Vacuolar fusion protein MON1 homolog A (MON1A) from Macaca fascicularis (Crab-eating macaque).